The following is a 607-amino-acid chain: Serum albumin (607 aa).

Residues 1 to 16 (MKWTILTALLIISAES) form the signal peptide. A propeptide spanning residues 17–20 (KNLY) is cleaved from the precursor. 3 consecutive Albumin domains span residues 19-209 (LYKR…TQLK), 210-401 (KALH…HVLA), and 403-600 (AIKE…ILIE). His27 is a binding site for Cu cation. 17 cysteine pairs are disulfide-bonded: Cys77–Cys86, Cys99–Cys115, Cys114–Cys125, Cys147–Cys192, Cys191–Cys200, Cys223–Cys269, Cys268–Cys276, Cys288–Cys302, Cys301–Cys312, Cys339–Cys384, Cys383–Cys392, Cys415–Cys461, Cys460–Cys471, Cys484–Cys500, Cys499–Cys510, Cys537–Cys582, and Cys581–Cys590. His270 and Asp272 together coordinate Zn(2+). Positions 272 and 275 each coordinate Ca(2+).

The protein belongs to the ALB/AFP/VDB family. Plasma. In the skin, widely distributed around the membranes of epithelial layer cells and within the stratum spongiosum of the dermis (at protein level).

Its subcellular location is the secreted. Its function is as follows. Serum albumin, the main protein of plasma, has a good binding capacity for water, Ca(2+), Na(+), K(+), fatty acids, hormones, bilirubin and drugs. Its main function is the regulation of the colloidal osmotic pressure of blood. Potent inhibitor of trypsin but has no inhibitory effect on thrombin, chymotrypsin, elastase and subtilisin. In Bombina maxima (Giant fire-bellied toad), this protein is Serum albumin.